A 221-amino-acid chain; its full sequence is MAVPLNLAVETEKAQALLQTFSTASLFASAGLGAFCFVADHFLTLPFIQHHLWLRALFDNTVHAIIGLWSWAIVIGLRKKSDFYEVILAGFLASVIDLDHFYMAGSLSIKAAVNLPHRPPLHCSTLIPALCFSLRLLMWACRLKDSWCSLPWMLFISLTSHHIRDGVRHGLWVCPFGNTAPISYWLYVTITATLPHLCSVLMYLTGTRDMISTKHGVAIDV.

Transmembrane regions (helical) follow at residues 28-48 (ASAGLGAFCFVADHFLTLPFI), 57-77 (LFDNTVHAIIGLWSWAIVIGL), 86-106 (VILAGFLASVIDLDHFYMAGS), 121-141 (LHCSTLIPALCFSLRLLMWAC), and 182-204 (ISYWLYVTITATLPHLCSVLMYL).

Its subcellular location is the membrane. The protein is Transmembrane protein 267 (tmem267) of Danio rerio (Zebrafish).